Reading from the N-terminus, the 261-residue chain is MGMKKKLSLGVASAALGLALVGGGTWAAFNDIKSKDATFASGTLDLSAKENSASVNLSNLKPGDKLTKDFQFENNGSLAIKEVLMALNYGDFKANGGSNTSPEDFLSQFEVTLLTVGKEGGNGYPKNIILDDANLKDLYLMSAKNDAAAAEKIKKQIDPKFLNASGKVNVATIDGKTAPEYDGVPKTPTDFDQVQMEIQFKDDKTKDEKGLMVQNKYQGNSIKLQFSFEATQWNGLTIKKDHTDKDGYVKENEKAHSEDKN.

Residues 1 to 27 (MGMKKKLSLGVASAALGLALVGGGTWA) form the signal peptide. Residues 241–261 (DHTDKDGYVKENEKAHSEDKN) form a disordered region.

Belongs to the peptidase M73 family. As to quaternary structure, forms fibers. Fibers have variable length and are 10-15 nm width. Interacts with obg (AC P20964) in pull-down experiments.

The protein resides in the secreted. The protein localises to the forespore intermembrane space. Its function is as follows. TasA is the major protein component of the biofilm extracellular matrix. It forms amyloid fibers that bind cells together in the biofilm. Exhibits an antibacterial activity against a variety of Gram-positive and Gram-negative bacteria. In laboratory strains, is also involved in proper spore coat assembly. The sequence is that of Major biofilm matrix component from Bacillus subtilis (strain 168).